The chain runs to 221 residues: Vesicle transport v-SNARE 13 (221 aa).

The Cytoplasmic portion of the chain corresponds to 1-198 (MSQGFERYER…MTRRMNRNKW (198 aa)). A coiled-coil region spans residues 32-93 (EQKKQNLSEI…FKTEVKRITS (62 aa)). The chain crosses the membrane as a helical; Anchor for type IV membrane protein span at residues 199 to 219 (TIGAIITVLVLAIIFILYFKL). Residues 220–221 (TR) are Vesicular-facing.

The protein belongs to the VTI1 family. In terms of assembly, forms SNARE complexes with t-SNAREs. As to expression, expressed at low levels in roots, stems, flowers and leaves.

It is found in the vacuole membrane. Its subcellular location is the prevacuolar compartment membrane. It localises to the endosome membrane. The protein resides in the early endosome membrane. Its function is as follows. May function as a v-SNARE responsible for targeting vesicles involved in the secretory pathway. Involved in actin-dependent endosomal trafficking pathways associated with the vacuole within root hairs and root tip epidermal cells. Essential for cell wall organization and polarized root hair growth. Also required for the localization of SYP41 to the trans-Golgi network in root hair cells. This is Vesicle transport v-SNARE 13 from Arabidopsis thaliana (Mouse-ear cress).